Here is a 62-residue protein sequence, read N- to C-terminus: U10-hottentoxin-Hj2a (62 aa).

An N-terminal signal peptide occupies residues 1–22 (MQKLLIILILFCILKFNVDVEG). Cystine bridges form between cysteine 28-cysteine 46, cysteine 33-cysteine 59, and cysteine 37-cysteine 61.

It belongs to the short scorpion toxin superfamily. Potassium channel inhibitor family. Alpha-KTx 23 subfamily. In terms of tissue distribution, expressed by the venom gland.

The protein resides in the secreted. May block potassium channels. The chain is U10-hottentoxin-Hj2a from Hottentotta judaicus (Black scorpion).